The sequence spans 284 residues: D-tagatose-1,6-bisphosphate aldolase subunit GatY (284 aa).

The active-site Proton donor is D82. The Zn(2+) site is built by H83 and H180. Position 181 (G181) interacts with dihydroxyacetone phosphate. Position 208 (H208) interacts with Zn(2+). Residues G209–S211 and N230–T233 each bind dihydroxyacetone phosphate.

This sequence belongs to the class II fructose-bisphosphate aldolase family. TagBP aldolase GatY subfamily. Forms a complex with GatZ. Requires Zn(2+) as cofactor.

It catalyses the reaction D-tagatofuranose 1,6-bisphosphate = D-glyceraldehyde 3-phosphate + dihydroxyacetone phosphate. Its pathway is carbohydrate metabolism; D-tagatose 6-phosphate degradation; D-glyceraldehyde 3-phosphate and glycerone phosphate from D-tagatose 6-phosphate: step 2/2. Functionally, catalytic subunit of the tagatose-1,6-bisphosphate aldolase GatYZ, which catalyzes the reversible aldol condensation of dihydroxyacetone phosphate (DHAP or glycerone-phosphate) with glyceraldehyde 3-phosphate (G3P) to produce tagatose 1,6-bisphosphate (TBP). Requires GatZ subunit for full activity and stability. Is involved in the catabolism of galactitol. This Escherichia coli O7:K1 (strain IAI39 / ExPEC) protein is D-tagatose-1,6-bisphosphate aldolase subunit GatY.